We begin with the raw amino-acid sequence, 128 residues long: MFS18 protein (128 aa).

The first 25 residues, 1 to 25, serve as a signal peptide directing secretion; sequence MARSSKMMVAARLLALALAVSTAEA. Residues 26-79 form a disordered region; sequence RNIKTTTTEKKDDAVVQPQTFPPFDRLGGGASPAFGGLPGGSIPGSSIPGFSMP. The span at 52–68 shows a compositional bias: gly residues; it reads LGGGASPAFGGLPGGSI. A run of 11 repeats spans residues 64–67, 64–75, 69–72, 69–80, 74–77, 79–82, 81–92, 86–89, 91–94, 104–107, and 113–116. Residues 64–92 are 3 X approximate tandem repeats; sequence PGGSIPGSSIPGFSMPGSGSSLPGFSLPG. Residues 64–116 form an 8 X 4 AA approximate repeats region; that stretch reads PGGSIPGSSIPGFSMPGSGSSLPGFSLPGSGTMPLFGGGSPGFSGFGGMPGSP. A compositionally biased stretch (low complexity) spans 69 to 79; it reads PGSSIPGFSMP. Over residues 99–113 the composition is skewed to gly residues; sequence FGGGSPGFSGFGGMP. The segment at 99–128 is disordered; that stretch reads FGGGSPGFSGFGGMPGSPTAGSVPEHANKP.

As to expression, enhanced expression in male flowers. Accumulates in the glumes and in anther walls, paleas and lemmas of mature florets.

In Zea mays (Maize), this protein is MFS18 protein (MFS18).